An 822-amino-acid polypeptide reads, in one-letter code: AP-1 complex subunit gamma-1 (822 aa).

Positions 597–628 (EIVQTNGETEPAPLETKPPPSGPQPTSQANDL) are disordered. Residues 702–817 (AGIPSITAYS…QDLAEVNNFP (116 aa)) enclose the GAE domain.

This sequence belongs to the adaptor complexes large subunit family. As to quaternary structure, adaptor protein complex 1 (AP-1) is a heterotetramer composed of two large adaptins (gamma-type subunit AP1G1 and beta-type subunit AP1B1), a medium adaptin (mu-type subunit AP1M1 or AP1M2) and a small adaptin (sigma-type subunit AP1S1 or AP1S2 or AP1S3). Interacts (via GAE domain) with RABEP1. Interacts with SYNRG/gamma-synergin. Interacts with EPS15. Interacts (via GAE domain) with AP1AR (via coiled-coil domain). Interacts with CLN3 (via dileucine motif); this interaction facilitates lysosomal targeting. Interacts (via GAE domain) with AFTPH/aftiphilin; the interaction is required to recruit AFTPH/aftiphilin to the perinuclear region of the cell. As to expression, widely expressed.

It localises to the golgi apparatus. The protein resides in the cytoplasmic vesicle. The protein localises to the clathrin-coated vesicle membrane. It is found in the cytoplasm. Its subcellular location is the perinuclear region. It localises to the clathrin-coated vesicle. The protein resides in the membrane. The protein localises to the clathrin-coated pit. Functionally, subunit of clathrin-associated adaptor protein complex 1 that plays a role in protein sorting in the late-Golgi/trans-Golgi network (TGN) and/or endosomes. The AP complexes mediate both the recruitment of clathrin to membranes and the recognition of sorting signals within the cytosolic tails of transmembrane cargo molecules. In association with AFTPH/aftiphilin in the aftiphilin/p200/gamma-synergin complex, involved in the trafficking of transferrin from early to recycling endosomes, and the membrane trafficking of furin and the lysosomal enzyme cathepsin D between the trans-Golgi network (TGN) and endosomes. This is AP-1 complex subunit gamma-1 (AP1G1) from Homo sapiens (Human).